The primary structure comprises 548 residues: DNA-binding protein REPIN1 (548 aa).

The disordered stretch occupies residues Met-1–Pro-47. Residues Gly-22 to Asn-31 show a composition bias toward polar residues. Residue Ser-27 is modified to Phosphoserine. At Lys-39 the chain carries N6-acetyllysine. The C2H2-type 1; atypical zinc-finger motif lies at His-53–Cys-75. 2 consecutive C2H2-type zinc fingers follow at residues Leu-81 to His-103 and Phe-112 to His-134. The C2H2-type 4; atypical zinc-finger motif lies at Ile-141–Cys-163. C2H2-type zinc fingers lie at residues Phe-173–His-195, Phe-232–His-254, His-260–His-282, Tyr-288–His-310, His-356–His-378, Phe-384–His-406, Phe-412–His-434, Phe-440–His-462, Tyr-468–His-490, Tyr-496–His-518, and Phe-524–His-546. N6-acetyllysine is present on Lys-272.

In terms of assembly, homodimers and homomultimers. Found in a complex with RIP60 and RIP100. Expressed in the liver and in subcutaneous and visceral adipose tissue.

It is found in the nucleus. Its subcellular location is the cytoplasm. It localises to the cytosol. Sequence-specific double-stranded DNA-binding protein. Binds ATT-rich and T-rich DNA sequences and facilitates DNA bending. May regulate the expression of genes involved in cellular fatty acid import, including SCARB1/CD36, and genes involved in lipid droplet formation. May regulate the expression of LCN2, and thereby influence iron metabolism and apoptosis-related pathways. May regulate the expression of genes involved in glucose transport. This chain is DNA-binding protein REPIN1 (Repin1), found in Rattus norvegicus (Rat).